Reading from the N-terminus, the 213-residue chain is Ribulose-phosphate 3-epimerase (213 aa).

Position 9 (Ser9) interacts with substrate. A divalent metal cation contacts are provided by His34, Asp36, and His66. Catalysis depends on Asp36, which acts as the Proton acceptor. Substrate is bound by residues His66, 139–142 (GFGG), 166–168 (DGG), and 186–187 (GS). A divalent metal cation is bound at residue Asp166. The Proton donor role is filled by Asp166.

The protein belongs to the ribulose-phosphate 3-epimerase family. Co(2+) is required as a cofactor. Requires Fe(2+) as cofactor. It depends on Mn(2+) as a cofactor. Zn(2+) serves as cofactor.

It catalyses the reaction D-ribulose 5-phosphate = D-xylulose 5-phosphate. It functions in the pathway carbohydrate degradation; pentose phosphate pathway; D-xylulose 5-phosphate from D-ribulose 5-phosphate (non-oxidative stage): step 1/1. Catalyzes the reversible epimerization of D-ribulose 5-phosphate to D-xylulose 5-phosphate. The protein is Ribulose-phosphate 3-epimerase (RPE1) of Encephalitozoon cuniculi (strain GB-M1) (Microsporidian parasite).